A 70-amino-acid chain; its full sequence is Large ribosomal subunit protein eL38 (70 aa).

Belongs to the eukaryotic ribosomal protein eL38 family.

This is Large ribosomal subunit protein eL38 (RPL38) from Artemia franciscana (Brine shrimp).